We begin with the raw amino-acid sequence, 277 residues long: Digeranylgeranylglyceryl phosphate synthase (277 aa).

The next 8 helical transmembrane spans lie at 16-36 (LLAG…LPEL), 40-60 (ILVF…NDYF), 83-105 (AALW…INIW), 107-124 (FLLA…AWKL), 146-166 (GAIA…AFLV), 202-222 (VGAL…KAGI), 224-244 (LGYL…FLIL), and 256-276 (QILL…ASLV).

The protein belongs to the UbiA prenyltransferase family. DGGGP synthase subfamily. It depends on Mg(2+) as a cofactor.

It is found in the cell membrane. The catalysed reaction is sn-3-O-(geranylgeranyl)glycerol 1-phosphate + (2E,6E,10E)-geranylgeranyl diphosphate = 2,3-bis-O-(geranylgeranyl)-sn-glycerol 1-phosphate + diphosphate. It participates in membrane lipid metabolism; glycerophospholipid metabolism. Its function is as follows. Prenyltransferase that catalyzes the transfer of the geranylgeranyl moiety of geranylgeranyl diphosphate (GGPP) to the C2 hydroxyl of (S)-3-O-geranylgeranylglyceryl phosphate (GGGP). This reaction is the second ether-bond-formation step in the biosynthesis of archaeal membrane lipids. The chain is Digeranylgeranylglyceryl phosphate synthase from Thermococcus kodakarensis (strain ATCC BAA-918 / JCM 12380 / KOD1) (Pyrococcus kodakaraensis (strain KOD1)).